Consider the following 1863-residue polypeptide: E3 ubiquitin-protein ligase ubr3 (1863 aa).

The UBR-type zinc finger occupies 80 to 151; the sequence is TLCGLVWTAN…ESGFCNRHRL (72 aa). Disordered regions lie at residues 302–330, 970–995, and 1128–1152; these read LDDSSKEEDQDGLQGVGQRKRVKLSSSTK, PEVERKRERERERETPPSTSSESATF, and IPPKKISPGDKKSMDKEERRQRARE. Composition is skewed to basic and acidic residues over residues 971-984 and 1134-1152; these read EVERKRERERERET and SPGDKKSMDKEERRQRARE. The segment at 1270–1328 adopts an RING-type; degenerate zinc-finger fold; it reads DSSCLQSVSIGWDGGVYVQTCGHTLHIDCHKSYMESLRNDQVLQGISVDKGEFTCPLCR.

It belongs to the E3 ubiquitin-protein ligase UBR1-like family.

The catalysed reaction is S-ubiquitinyl-[E2 ubiquitin-conjugating enzyme]-L-cysteine + [acceptor protein]-L-lysine = [E2 ubiquitin-conjugating enzyme]-L-cysteine + N(6)-ubiquitinyl-[acceptor protein]-L-lysine.. It functions in the pathway protein modification; protein ubiquitination. Functionally, E3 ubiquitin-protein ligase which is a component of the N-end rule pathway. Recognizes and binds to proteins bearing specific N-terminal residues, leading to their ubiquitination and subsequent degradation. Positively regulates hedgehog/shh-signaling pathways that function in eye development, neuronal specification and somite development. Activation of shh up-regulates transcription of ubr3, which in turn promotes hedgehog/shh signaling possibly by controlling negative regulators such as Kif7. The protein is E3 ubiquitin-protein ligase ubr3 of Danio rerio (Zebrafish).